Here is a 100-residue protein sequence, read N- to C-terminus: Urease subunit gamma (100 aa).

This sequence belongs to the urease gamma subunit family. Heterotrimer of UreA (gamma), UreB (beta) and UreC (alpha) subunits. Three heterotrimers associate to form the active enzyme. The apoenzyme interacts with an accessory complex composed of UreD, UreF and UreG, which is required for the assembly of the nickel containing metallocenter of UreC. The UreE protein may also play a direct role as a metallochaperone in nickel transfer to the urease apoprotein.

Its subcellular location is the cytoplasm. The catalysed reaction is urea + 2 H2O + H(+) = hydrogencarbonate + 2 NH4(+). It functions in the pathway nitrogen metabolism; urea degradation; CO(2) and NH(3) from urea (urease route): step 1/1. Its activity is regulated as follows. The apoenzyme can be activated in vitro in the presence of nickel ions and carbon dioxide, which promotes carbamylation of 'Lys-217' of the UreC (alpha) subunit. This is Urease subunit gamma from Klebsiella aerogenes (Enterobacter aerogenes).